The chain runs to 122 residues: Large ribosomal subunit protein uL14c (122 aa).

Belongs to the universal ribosomal protein uL14 family. Part of the 50S ribosomal subunit.

It localises to the plastid. The protein localises to the chloroplast. Binds to 23S rRNA. In Citrus sinensis (Sweet orange), this protein is Large ribosomal subunit protein uL14c.